The primary structure comprises 463 residues: MTSETRTLYSQLPAIDRLLHDSAFLSLCDQYGHTQVVDLLRRMLDDARDVIRNTQTLPDWCADWAQEANLRLEKAAQSALRPVINLTGTVLHTNLGRAWQAQEAIDAVMQAMRAPVTLEYDLDGAGRGHRDRALATLLCRITGAEDACIVNNNAAAVLLMLAATASGKEVVVSRGELVEIGGAFRIPDVMRQAGCTLHEVGTTNRTHAKDYRQAVNENTGLLMKVHTSNYSIEGFTKAVEEAELAEIGRELDIPVVADLGSGSLVDLSQYGLPKEPMPQQLIAAGVSLVSFSGDKLLGGPQAGIIVGKKAMIAQLQSHPLKRALRADKMTLAALEATLRLYLHPEALSEKLPTLRLLTRSEASIREQAQRLQARLVARYGDEFTLEVKPCLSQIGSGSLPVDRLPSAAMTFTPHDGRGSRLEALAAHWRTLPVPIIGRIYDGRLWLDMRCLEDESRFMEMMLK.

Lys295 is subject to N6-(pyridoxal phosphate)lysine.

Belongs to the SelA family. Homodecamer; pentamer of dimers. Binds only one seryl-tRNA(Sec) per dimer. It depends on pyridoxal 5'-phosphate as a cofactor.

It localises to the cytoplasm. It catalyses the reaction L-seryl-tRNA(Sec) + selenophosphate + H(+) = L-selenocysteinyl-tRNA(Sec) + phosphate. It participates in aminoacyl-tRNA biosynthesis; selenocysteinyl-tRNA(Sec) biosynthesis; selenocysteinyl-tRNA(Sec) from L-seryl-tRNA(Sec) (bacterial route): step 1/1. Converts seryl-tRNA(Sec) to selenocysteinyl-tRNA(Sec) required for selenoprotein biosynthesis. This Salmonella arizonae (strain ATCC BAA-731 / CDC346-86 / RSK2980) protein is L-seryl-tRNA(Sec) selenium transferase.